Here is a 229-residue protein sequence, read N- to C-terminus: Ribosomal RNA small subunit methyltransferase G (229 aa).

S-adenosyl-L-methionine-binding positions include Gly-87, Leu-92, 138 to 139 (VE), and Arg-154.

Belongs to the methyltransferase superfamily. RNA methyltransferase RsmG family.

The protein resides in the cytoplasm. It catalyses the reaction guanosine(527) in 16S rRNA + S-adenosyl-L-methionine = N(7)-methylguanosine(527) in 16S rRNA + S-adenosyl-L-homocysteine. In terms of biological role, specifically methylates the N7 position of guanine in position 527 of 16S rRNA. This is Ribosomal RNA small subunit methyltransferase G from Oleidesulfovibrio alaskensis (strain ATCC BAA-1058 / DSM 17464 / G20) (Desulfovibrio alaskensis).